The following is a 375-amino-acid chain: Probable L-tyrosine/L-aspartate decarboxylase (375 aa).

K226 is modified (N6-(pyridoxal phosphate)lysine).

This sequence belongs to the group II decarboxylase family. MfnA subfamily. Pyridoxal 5'-phosphate serves as cofactor.

It carries out the reaction L-tyrosine + H(+) = tyramine + CO2. It catalyses the reaction L-aspartate + H(+) = beta-alanine + CO2. The protein operates within cofactor biosynthesis; methanofuran biosynthesis. It participates in cofactor biosynthesis; coenzyme A biosynthesis. Catalyzes the decarboxylation of L-tyrosine to produce tyramine for methanofuran biosynthesis. Can also catalyze the decarboxylation of L-aspartate to produce beta-alanine for coenzyme A (CoA) biosynthesis. The polypeptide is Probable L-tyrosine/L-aspartate decarboxylase (Methanocella arvoryzae (strain DSM 22066 / NBRC 105507 / MRE50)).